The chain runs to 303 residues: Type II methyltransferase M.MjaI (303 aa).

It belongs to the N(4)/N(6)-methyltransferase family. N(4) subfamily.

It catalyses the reaction a 2'-deoxycytidine in DNA + S-adenosyl-L-methionine = an N(4)-methyl-2'-deoxycytidine in DNA + S-adenosyl-L-homocysteine + H(+). In terms of biological role, a beta subtype methylase that recognizes the double-stranded sequence 5'-CTAG-3', methylates C-1 on both strands, and protects the DNA from cleavage by the MjaI endonuclease. This is Type II methyltransferase M.MjaI (mjaIM) from Methanocaldococcus jannaschii (strain ATCC 43067 / DSM 2661 / JAL-1 / JCM 10045 / NBRC 100440) (Methanococcus jannaschii).